Reading from the N-terminus, the 541-residue chain is Eukaryotic translation initiation factor 3 subunit D-1 (541 aa).

Residues 98 to 136 form a disordered region; that stretch reads VQKPPHQRGRFRNMRGRGGRGRNPRGGLNNHHHHGMTTL. Residues 100–120 show a composition bias toward basic residues; sequence KPPHQRGRFRNMRGRGGRGRN.

Belongs to the eIF-3 subunit D family. Component of the eukaryotic translation initiation factor 3 (eIF-3) complex. The eIF-3 complex interacts with pix.

Its subcellular location is the cytoplasm. Functionally, mRNA cap-binding component of the eukaryotic translation initiation factor 3 (eIF-3) complex, which is involved in protein synthesis of a specialized repertoire of mRNAs and, together with other initiation factors, stimulates binding of mRNA and methionyl-tRNAi to the 40S ribosome. The eIF-3 complex specifically targets and initiates translation of a subset of mRNAs involved in cell proliferation. In the eIF-3 complex, eif3d specifically recognizes and binds the 7-methylguanosine cap of a subset of mRNAs. In Drosophila persimilis (Fruit fly), this protein is Eukaryotic translation initiation factor 3 subunit D-1.